We begin with the raw amino-acid sequence, 188 residues long: MDAETLLLETEESMLKAVDFAKQEFSGVRTGKASPGLVENLDVHVSSYGSVMKLKGLAVISTPEPRLILIQPFDPSTVHDIGRAINESKLNLNPLVEGRSIRLPIPALTEERRKDLVKLVKSQAEEARVRVRGARKAAMDSAKKLKAENIVTEDGQRDLETQIQKLTDKYVKEIDELVAVKEKDIMTI.

It belongs to the RRF family.

Its subcellular location is the cytoplasm. In terms of biological role, responsible for the release of ribosomes from messenger RNA at the termination of protein biosynthesis. May increase the efficiency of translation by recycling ribosomes from one round of translation to another. The chain is Ribosome-recycling factor from Akkermansia muciniphila (strain ATCC BAA-835 / DSM 22959 / JCM 33894 / BCRC 81048 / CCUG 64013 / CIP 107961 / Muc).